Reading from the N-terminus, the 873-residue chain is DNA helicase/primase complex-associated protein (873 aa).

The disordered stretch occupies residues 394-422; the sequence is PPLPRDDGDGENNVVEVSSSTGGAHPPSD.

This sequence belongs to the herpesviridae HEPA family. Associates with the primase and the helicase to form the helicase-primase complex. Interacts with the origin-binding protein. Interacts with the polymerase catalytic subunit.

It is found in the host nucleus. Its function is as follows. Component of the helicase/primase complex. Unwinds the DNA at the replication forks and generates single-stranded DNA for both leading and lagging strand synthesis. The primase synthesizes short RNA primers on the lagging strand that the polymerase presumably elongates using dNTPs. The primase-associated factor has no known catalytic activity in the complex and may serve to facilitate the formation of the replisome by directly interacting with the origin-binding protein and the polymerase. This is DNA helicase/primase complex-associated protein (UL102) from Homo sapiens (Human).